We begin with the raw amino-acid sequence, 438 residues long: MASSSLCHRYFNKITVTPFFNTKKLHHYSPRRISLRVNRRSFSISATMSSSTKKVLIPVAHGTEPFEAVVMIDVLRRGGADVTVASVENQVGVDACHGIKMVADTLLSDITDSVFDLIMLPGGLPGGETLKNCKPLEKMVKKQDTDGRLNAAICCAPALAFGTWGLLEGKKATCYPVFMEKLAACATAVESRVEIDGKIVTSRGPGTTMEFSVTLVEQLLGKEKAVEVSGPLVMRPNPGDEYTITELNQVSWSFEGTPQILVPIADGSEEMEAVAIIDVLKRAKANVVVAALGNSLEVVASRKVKLVADVLLDEAEKNSYDLIVLPGGLGGAEAFASSEKLVNMLKKQAESNKPYGAICASPALVFEPHGLLKGKKATAFPAMCSKLTDQSHIEHRVLVDGNLITSRGPGTSLEFALAIVEKFYGREKGLQLSKATLV.

The N-terminal 45 residues, 1-45, are a transit peptide targeting the chloroplast; sequence MASSSLCHRYFNKITVTPFFNTKKLHHYSPRRISLRVNRRSFSIS. 2 consecutive PfpI endopeptidase domains span residues 53-220 and 258-424; these read KKVL…EQLL and PQIL…EKFY.

Belongs to the peptidase C56 family. Homodimer.

It localises to the plastid. Its subcellular location is the chloroplast. May be involved in oxidative stress response. The polypeptide is Protein DJ-1 homolog B (DJ1B) (Arabidopsis thaliana (Mouse-ear cress)).